The sequence spans 258 residues: Small ribosomal subunit protein uS2 (258 aa).

Belongs to the universal ribosomal protein uS2 family.

This chain is Small ribosomal subunit protein uS2, found in Leuconostoc mesenteroides subsp. mesenteroides (strain ATCC 8293 / DSM 20343 / BCRC 11652 / CCM 1803 / JCM 6124 / NCDO 523 / NBRC 100496 / NCIMB 8023 / NCTC 12954 / NRRL B-1118 / 37Y).